Here is a 192-residue protein sequence, read N- to C-terminus: Protein GrpE (192 aa).

The segment at 1–43 is disordered; it reads MQENKQPSEIQGELPQPPDGESVPPQPTNEQAPPDTDTMPRIE.

The protein belongs to the GrpE family. Homodimer.

The protein resides in the cytoplasm. In terms of biological role, participates actively in the response to hyperosmotic and heat shock by preventing the aggregation of stress-denatured proteins, in association with DnaK and GrpE. It is the nucleotide exchange factor for DnaK and may function as a thermosensor. Unfolded proteins bind initially to DnaJ; upon interaction with the DnaJ-bound protein, DnaK hydrolyzes its bound ATP, resulting in the formation of a stable complex. GrpE releases ADP from DnaK; ATP binding to DnaK triggers the release of the substrate protein, thus completing the reaction cycle. Several rounds of ATP-dependent interactions between DnaJ, DnaK and GrpE are required for fully efficient folding. The protein is Protein GrpE of Aromatoleum aromaticum (strain DSM 19018 / LMG 30748 / EbN1) (Azoarcus sp. (strain EbN1)).